Here is a 397-residue protein sequence, read N- to C-terminus: 2-oxoglutarate and iron-dependent oxygenase domain-containing protein ICU11 (397 aa).

Residues 1–56 (MCNQTPLRSMALDSSGKQPEQQQQQQPRASSGNGEARLKLRRTPNEEHEPENYEDL) are disordered. Low complexity predominate over residues 18–27 (QPEQQQQQQP). The Fe2OG dioxygenase domain maps to 238–339 (SLDSHHGYIV…RANLILWCRS (102 aa)). Histidine 260, aspartate 262, and histidine 320 together coordinate Fe cation. Arginine 330 serves as a coordination point for 2-oxoglutarate.

Requires Fe(2+) as cofactor. The cofactor is L-ascorbate. In terms of tissue distribution, expressed in roots, cotyledons, rosette leaves, cauline leaves and inflorescences.

The protein resides in the nucleus. Its subcellular location is the nucleoplasm. In terms of biological role, participates in the epigenetic repression of flowering genes in association with CP2. Functions in the repression of several members of the MADS-box transcription factors family, including SEP3, during vegetative development via histone modification. This is 2-oxoglutarate and iron-dependent oxygenase domain-containing protein ICU11 from Arabidopsis thaliana (Mouse-ear cress).